Reading from the N-terminus, the 88-residue chain is uncharacterized protein (88 aa).

This is an uncharacterized protein from Sulfolobus islandicus filamentous virus (isolate Iceland/Hveragerdi) (SIFV).